Consider the following 85-residue polypeptide: Oxytocin-neurophysin 1 (85 aa).

Glycine amide is present on G3. Disulfide bonds link C16–C60, C19–C33, C27–C50, C34–C40, C67–C79, and C80–C85.

The protein belongs to the vasopressin/oxytocin family. As to quaternary structure, interacts with oxytocin receptor (Ki=1.5 nM). Interacts with vasopressin V1aR/AVPR1A (Ki=37 nM), V1bR/AVPR1B (Ki=222 nM), and V2R/AVPR2 receptors (Ki=823 nM).

Its function is as follows. Neurophysin 1 specifically binds oxytocin. Functionally, oxytocin causes contraction of the smooth muscle of the uterus and of the mammary gland. Acts by binding to oxytocin receptor (OXTR). In Papio hamadryas (Hamadryas baboon), this protein is Oxytocin-neurophysin 1 (OXT).